The sequence spans 229 residues: PKHD-type hydroxylase BBta_1313 (229 aa).

In terms of domain architecture, Fe2OG dioxygenase spans 78–180 (HIFPPLFNRY…RIASFFWLQS (103 aa)). 3 residues coordinate Fe cation: His98, Asp100, and His161. Arg171 is a binding site for 2-oxoglutarate.

It depends on Fe(2+) as a cofactor. The cofactor is L-ascorbate.

This Bradyrhizobium sp. (strain BTAi1 / ATCC BAA-1182) protein is PKHD-type hydroxylase BBta_1313.